The chain runs to 505 residues: Apolipoprotein N-acyltransferase (505 aa).

Transmembrane regions (helical) follow at residues 26–46, 66–86, 89–109, 129–149, 161–181, and 186–206; these read FAPY…LILL, FATG…MPLI, LFLM…FAWL, LWLI…WLWL, FAPI…AGAL, and IHKQ…GFGI. The CN hydrolase domain maps to 225-471; the sequence is IQGNVDQNLK…TAVLRAELTP (247 aa). Catalysis depends on glutamate 264, which acts as the Proton acceptor. Lysine 330 is an active-site residue. Cysteine 382 functions as the Nucleophile in the catalytic mechanism. The chain crosses the membrane as a helical span at residues 481-501; the sequence is FGTWPLYFWVALSLMLAWWLP.

Belongs to the CN hydrolase family. Apolipoprotein N-acyltransferase subfamily.

It is found in the cell inner membrane. The enzyme catalyses N-terminal S-1,2-diacyl-sn-glyceryl-L-cysteinyl-[lipoprotein] + a glycerophospholipid = N-acyl-S-1,2-diacyl-sn-glyceryl-L-cysteinyl-[lipoprotein] + a 2-acyl-sn-glycero-3-phospholipid + H(+). The protein operates within protein modification; lipoprotein biosynthesis (N-acyl transfer). Catalyzes the phospholipid dependent N-acylation of the N-terminal cysteine of apolipoprotein, the last step in lipoprotein maturation. In Vibrio parahaemolyticus serotype O3:K6 (strain RIMD 2210633), this protein is Apolipoprotein N-acyltransferase.